The following is a 371-amino-acid chain: Ferrochelatase (371 aa).

Positions 218 and 299 each coordinate Fe cation.

This sequence belongs to the ferrochelatase family.

It is found in the cytoplasm. It carries out the reaction heme b + 2 H(+) = protoporphyrin IX + Fe(2+). It functions in the pathway porphyrin-containing compound metabolism; protoheme biosynthesis; protoheme from protoporphyrin-IX: step 1/1. Its function is as follows. Catalyzes the ferrous insertion into protoporphyrin IX. This is Ferrochelatase from Cupriavidus necator (strain ATCC 17699 / DSM 428 / KCTC 22496 / NCIMB 10442 / H16 / Stanier 337) (Ralstonia eutropha).